Here is a 267-residue protein sequence, read N- to C-terminus: Diphthine--ammonia ligase (267 aa).

Y97 bears the Phosphotyrosine mark.

It belongs to the Diphthine--ammonia ligase family.

It catalyses the reaction diphthine-[translation elongation factor 2] + NH4(+) + ATP = diphthamide-[translation elongation factor 2] + AMP + diphosphate + H(+). It participates in protein modification; peptidyl-diphthamide biosynthesis. Functionally, amidase that catalyzes the last step of diphthamide biosynthesis using ammonium and ATP. Diphthamide biosynthesis consists in the conversion of an L-histidine residue in the translation elongation factor eEF-2 (EEF2) to diphthamide. The protein is Diphthine--ammonia ligase (Dph6) of Rattus norvegicus (Rat).